The following is a 210-amino-acid chain: Transcriptional regulator MxiE (210 aa).

Residues 99–199 form the HTH araC/xylS-type domain; that stretch reads YHLVLYLLRT…GFSARELSNI (101 aa). 2 consecutive DNA-binding regions (H-T-H motif) follow at residues 118 to 139 and 166 to 189; these read KSLT…RKAL and ITSA…KTRL.

Its function is as follows. Necessary for the secretion of ipa invasins. Probable transcriptional regulatory protein. The chain is Transcriptional regulator MxiE (mxiE) from Shigella flexneri.